The following is a 505-amino-acid chain: Beta-agarase (505 aa).

The first 23 residues, 1–23 (MLKVIPWLLVTSSLVAIPTYIHA), serve as a signal peptide directing secretion. Glu200 (proton donor) is an active-site residue. The active-site Nucleophile is the Glu322.

Belongs to the glycosyl hydrolase 86 family.

It localises to the secreted. It catalyses the reaction Hydrolysis of (1-&gt;4)-beta-D-galactosidic linkages in agarose, giving the tetramer as the predominant product.. In terms of biological role, hydrolase that cleaves agar at the (1-&gt;4) linkage, producing tetrameric saccharide molecules. Is specific for agar and agarose and does not digest alginate or carrageenan. In Pseudoalteromonas atlantica (Alteromonas atlantica), this protein is Beta-agarase.